The sequence spans 1193 residues: uncharacterized protein (1193 aa).

The N-terminal stretch at 1–25 (MKIKFINYLLLFFIIFLNYNGFVKS) is a signal peptide. Residues 26 to 1172 (DCYQELDLVL…PQDPSDELST (1147 aa)) are Extracellular-facing. Asn-90, Asn-183, Asn-226, Asn-265, Asn-281, Asn-345, Asn-357, Asn-436, Asn-516, Asn-552, Asn-583, Asn-627, Asn-712, Asn-765, Asn-822, Asn-938, Asn-1038, and Asn-1092 each carry an N-linked (GlcNAc...) asparagine glycan. A helical transmembrane segment spans residues 1173–1193 (SSFVQVNLLFLSILIFTIFIF).

The protein resides in the membrane. This is an uncharacterized protein from Dictyostelium discoideum (Social amoeba).